The following is a 316-amino-acid chain: Peroxidase 67 (316 aa).

Residues 1–19 form the signal peptide; sequence MLKVVLLMMIMMLASQSEA. Q20 carries the pyrrolidone carboxylic acid modification. 4 disulfide bridges follow: C30/C110, C63/C68, C116/C312, and C196/C221. Residue H61 is the Proton acceptor of the active site. Ca(2+)-binding residues include D62, V65, G67, D69, and S71. Residue P159 coordinates substrate. H189 contributes to the heme b binding site. T190 provides a ligand contact to Ca(2+). N-linked (GlcNAc...) asparagine glycosylation occurs at N205. 3 residues coordinate Ca(2+): D236, S239, and D244.

The protein belongs to the peroxidase family. Classical plant (class III) peroxidase subfamily. Heme b is required as a cofactor. Ca(2+) serves as cofactor.

It is found in the secreted. The enzyme catalyses 2 a phenolic donor + H2O2 = 2 a phenolic radical donor + 2 H2O. Removal of H(2)O(2), oxidation of toxic reductants, biosynthesis and degradation of lignin, suberization, auxin catabolism, response to environmental stresses such as wounding, pathogen attack and oxidative stress. These functions might be dependent on each isozyme/isoform in each plant tissue. The chain is Peroxidase 67 (PER67) from Arabidopsis thaliana (Mouse-ear cress).